The sequence spans 311 residues: Beta-ketoacyl-[acyl-carrier-protein] synthase III (311 aa).

Residues Cys-114 and His-238 contribute to the active site. Positions 239–243 (QANIR) are ACP-binding. The active site involves Asn-268.

Belongs to the thiolase-like superfamily. FabH family. As to quaternary structure, homodimer.

Its subcellular location is the cytoplasm. It catalyses the reaction malonyl-[ACP] + acetyl-CoA + H(+) = 3-oxobutanoyl-[ACP] + CO2 + CoA. Its pathway is lipid metabolism; fatty acid biosynthesis. In terms of biological role, catalyzes the condensation reaction of fatty acid synthesis by the addition to an acyl acceptor of two carbons from malonyl-ACP. Catalyzes the first condensation reaction which initiates fatty acid synthesis and may therefore play a role in governing the total rate of fatty acid production. Possesses both acetoacetyl-ACP synthase and acetyl transacylase activities. Its substrate specificity determines the biosynthesis of branched-chain and/or straight-chain of fatty acids. The protein is Beta-ketoacyl-[acyl-carrier-protein] synthase III of Neorickettsia sennetsu (strain ATCC VR-367 / Miyayama) (Ehrlichia sennetsu).